Reading from the N-terminus, the 417-residue chain is Serine hydroxymethyltransferase (417 aa).

(6S)-5,6,7,8-tetrahydrofolate is bound by residues leucine 121 and glycine 125–leucine 127. Lysine 229 is modified (N6-(pyridoxal phosphate)lysine). Position 355-357 (serine 355–phenylalanine 357) interacts with (6S)-5,6,7,8-tetrahydrofolate.

This sequence belongs to the SHMT family. In terms of assembly, homodimer. Pyridoxal 5'-phosphate is required as a cofactor.

It is found in the cytoplasm. It carries out the reaction (6R)-5,10-methylene-5,6,7,8-tetrahydrofolate + glycine + H2O = (6S)-5,6,7,8-tetrahydrofolate + L-serine. The protein operates within one-carbon metabolism; tetrahydrofolate interconversion. Its pathway is amino-acid biosynthesis; glycine biosynthesis; glycine from L-serine: step 1/1. In terms of biological role, catalyzes the reversible interconversion of serine and glycine with tetrahydrofolate (THF) serving as the one-carbon carrier. This reaction serves as the major source of one-carbon groups required for the biosynthesis of purines, thymidylate, methionine, and other important biomolecules. Also exhibits THF-independent aldolase activity toward beta-hydroxyamino acids, producing glycine and aldehydes, via a retro-aldol mechanism. This is Serine hydroxymethyltransferase from Buchnera aphidicola subsp. Baizongia pistaciae (strain Bp).